Consider the following 170-residue polypeptide: Probable chemoreceptor glutamine deamidase CheD 3 (170 aa).

Belongs to the CheD family.

It catalyses the reaction L-glutaminyl-[protein] + H2O = L-glutamyl-[protein] + NH4(+). In terms of biological role, probably deamidates glutamine residues to glutamate on methyl-accepting chemotaxis receptors (MCPs), playing an important role in chemotaxis. The polypeptide is Probable chemoreceptor glutamine deamidase CheD 3 (Dechloromonas aromatica (strain RCB)).